A 138-amino-acid polypeptide reads, in one-letter code: Nucleoside diphosphate kinase (138 aa).

The ATP site is built by K10, F58, R86, T92, R103, and N113. H116 acts as the Pros-phosphohistidine intermediate in catalysis.

Belongs to the NDK family. In terms of assembly, homotetramer. The cofactor is Mg(2+).

Its subcellular location is the cytoplasm. The enzyme catalyses a 2'-deoxyribonucleoside 5'-diphosphate + ATP = a 2'-deoxyribonucleoside 5'-triphosphate + ADP. It catalyses the reaction a ribonucleoside 5'-diphosphate + ATP = a ribonucleoside 5'-triphosphate + ADP. Its function is as follows. Major role in the synthesis of nucleoside triphosphates other than ATP. The ATP gamma phosphate is transferred to the NDP beta phosphate via a ping-pong mechanism, using a phosphorylated active-site intermediate. In Glaesserella parasuis serovar 5 (strain SH0165) (Haemophilus parasuis), this protein is Nucleoside diphosphate kinase.